Consider the following 244-residue polypeptide: tRNA pseudouridine synthase A (244 aa).

The active-site Nucleophile is the D52. Residue Y110 participates in substrate binding.

This sequence belongs to the tRNA pseudouridine synthase TruA family. In terms of assembly, homodimer.

It carries out the reaction uridine(38/39/40) in tRNA = pseudouridine(38/39/40) in tRNA. Functionally, formation of pseudouridine at positions 38, 39 and 40 in the anticodon stem and loop of transfer RNAs. In Clostridium botulinum (strain Alaska E43 / Type E3), this protein is tRNA pseudouridine synthase A.